Reading from the N-terminus, the 123-residue chain is UPF0102 protein Psyr_4114 (123 aa).

The protein belongs to the UPF0102 family.

The protein is UPF0102 protein Psyr_4114 of Pseudomonas syringae pv. syringae (strain B728a).